The chain runs to 250 residues: Isoprenyl transferase (250 aa).

Residue Asp27 is part of the active site. Position 27 (Asp27) interacts with Mg(2+). Residues 28 to 31 (GNRR), Trp32, His48, and 76 to 78 (STE) each bind substrate. Asn79 functions as the Proton acceptor in the catalytic mechanism. Substrate-binding positions include Phe80, Arg82, Arg199, and 205–207 (RVS). Glu218 provides a ligand contact to Mg(2+).

This sequence belongs to the UPP synthase family. In terms of assembly, homodimer. It depends on Mg(2+) as a cofactor.

Catalyzes the condensation of isopentenyl diphosphate (IPP) with allylic pyrophosphates generating different type of terpenoids. This is Isoprenyl transferase from Chlamydia caviae (strain ATCC VR-813 / DSM 19441 / 03DC25 / GPIC) (Chlamydophila caviae).